The chain runs to 259 residues: Bisphosphoglycerate mutase (259 aa).

Ser-2 is subject to N-acetylserine. Residues 10-17, 23-24, Arg-62, 89-92, Arg-100, and 116-117 contribute to the substrate site; these read RHGEGAWN, CS, ERHY, and RR. The Tele-phosphohistidine intermediate role is filled by His-11. Glu-89 acts as the Proton donor/acceptor in catalysis. At Thr-122 the chain carries Phosphothreonine. 189-190 contacts substrate; sequence GN.

Belongs to the phosphoglycerate mutase family. BPG-dependent PGAM subfamily. As to quaternary structure, homodimer. Expressed in red blood cells.

The catalysed reaction is (2R)-3-phospho-glyceroyl phosphate = (2R)-2,3-bisphosphoglycerate + H(+). The enzyme catalyses (2R)-2-phosphoglycerate = (2R)-3-phosphoglycerate. With respect to regulation, at alkaline pH BPGM favors the synthase reaction; however, at lower pH the phosphatase reaction is dominant. Inhibited by citrate. In terms of biological role, plays a major role in regulating hemoglobin oxygen affinity by controlling the levels of its allosteric effector 2,3-bisphosphoglycerate (2,3-BPG). Also exhibits mutase (EC 5.4.2.11) activity. In Oryctolagus cuniculus (Rabbit), this protein is Bisphosphoglycerate mutase (BPGM).